We begin with the raw amino-acid sequence, 69 residues long: Probable Sec-independent protein translocase protein TatE (69 aa).

Residues 1–21 form a helical membrane-spanning segment; the sequence is MEGISIAKLLVIGALIVLLFG. The segment at 45-69 is disordered; sequence DDQPAAKSSAQDEHPAAISETRPKE. The segment covering 54–69 has biased composition (basic and acidic residues); sequence AQDEHPAAISETRPKE.

The protein belongs to the TatA/E family. TatE subfamily.

Its subcellular location is the cell inner membrane. Its function is as follows. Part of the twin-arginine translocation (Tat) system that transports large folded proteins containing a characteristic twin-arginine motif in their signal peptide across membranes. TatE shares overlapping functions with TatA. The polypeptide is Probable Sec-independent protein translocase protein TatE (Dickeya chrysanthemi (strain Ech1591) (Dickeya zeae (strain Ech1591))).